The chain runs to 352 residues: Peptide chain release factor 1 (352 aa).

Glutamine 233 bears the N5-methylglutamine mark. The interval 288-309 (NAKDRKEQVGSGDRSERIRTYN) is disordered. Basic and acidic residues predominate over residues 289–306 (AKDRKEQVGSGDRSERIR).

Belongs to the prokaryotic/mitochondrial release factor family. Post-translationally, methylated by PrmC. Methylation increases the termination efficiency of RF1.

It localises to the cytoplasm. In terms of biological role, peptide chain release factor 1 directs the termination of translation in response to the peptide chain termination codons UAG and UAA. The chain is Peptide chain release factor 1 from Helicobacter pylori (strain G27).